The chain runs to 393 residues: Formate-dependent phosphoribosylglycinamide formyltransferase (393 aa).

N(1)-(5-phospho-beta-D-ribosyl)glycinamide contacts are provided by residues 22 to 23 (EL) and Glu-82. Residues Arg-114, Lys-155, 160–165 (SSGKGQ), 195–198 (EGFI), and Glu-203 contribute to the ATP site. The ATP-grasp domain maps to 119-308 (RLAAEELGLP…EFALHARAIL (190 aa)). Mg(2+) contacts are provided by Glu-267 and Glu-279. N(1)-(5-phospho-beta-D-ribosyl)glycinamide-binding positions include Asp-286, Lys-356, and 363 to 364 (RR).

It belongs to the PurK/PurT family. Homodimer.

The catalysed reaction is N(1)-(5-phospho-beta-D-ribosyl)glycinamide + formate + ATP = N(2)-formyl-N(1)-(5-phospho-beta-D-ribosyl)glycinamide + ADP + phosphate + H(+). The protein operates within purine metabolism; IMP biosynthesis via de novo pathway; N(2)-formyl-N(1)-(5-phospho-D-ribosyl)glycinamide from N(1)-(5-phospho-D-ribosyl)glycinamide (formate route): step 1/1. Its function is as follows. Involved in the de novo purine biosynthesis. Catalyzes the transfer of formate to 5-phospho-ribosyl-glycinamide (GAR), producing 5-phospho-ribosyl-N-formylglycinamide (FGAR). Formate is provided by PurU via hydrolysis of 10-formyl-tetrahydrofolate. This is Formate-dependent phosphoribosylglycinamide formyltransferase from Azotobacter vinelandii (strain DJ / ATCC BAA-1303).